A 395-amino-acid polypeptide reads, in one-letter code: MRLPRFSSTVMLSLLMVQTGILVFLVSRQVPSSPAGLGERVHVLVLSSWRSGSSFVGQLFSQHPDVFYLMEPAWHVWDTLSQGSAPALHMAVRDLIRSVFLCDMDVFDAYLPWRRNISDLFQWAVSRALCSPPVCEAFARGNISSEEVCKPLCATRPFGLAQEACSSYSHVVLKEVRFFNLQVLYPLLSDPALNLRIVHLVRDPRAVLRSREQTAKALARDNGIVLGTNGTWVEADPRLRVVNEVCRSHVRIAEAALHKPPPFLQDRYRLVRYEDLARDPLTVIRELYAFTGLGLTPQLQTWIHNITHGSGPGARREAFKTTSRDALSVSQAWRHTLPFAKIRRVQELCGGALQLLGYRSVHSELEQRDLSLDLLLPRGMDSFKWASSTEKQPES.

The Cytoplasmic portion of the chain corresponds to 1-7 (MRLPRFS). The helical; Signal-anchor for type II membrane protein transmembrane segment at 8–26 (STVMLSLLMVQTGILVFLV) threads the bilayer. Over 27 to 395 (SRQVPSSPAG…ASSTEKQPES (369 aa)) the chain is Lumenal. Position 49–55 (49–55 (WRSGSSF)) interacts with 3'-phosphoadenylyl sulfate. Asn116 and Asn142 each carry an N-linked (GlcNAc...) asparagine glycan. 202 to 210 (RDPRAVLRS) contributes to the 3'-phosphoadenylyl sulfate binding site. 2 N-linked (GlcNAc...) asparagine glycosylation sites follow: Asn229 and Asn305.

This sequence belongs to the sulfotransferase 1 family. Gal/GlcNAc/GalNAc subfamily. In terms of tissue distribution, expressed in cornea.

It is found in the golgi apparatus membrane. Functionally, sulfotransferase that utilizes 3'-phospho-5'-adenylyl sulfate (PAPS) as sulfonate donor to catalyze the transfer of sulfate to position 6 of non-reducing N-acetylglucosamine (GlcNAc) residues of keratan. Mediates sulfation of keratan in cornea. Keratan sulfate plays a central role in maintaining corneal transparency. Acts on the non-reducing terminal GlcNAc of short and long carbohydrate substrates that have poly-N-acetyllactosamine structures. May also have activity toward O-linked sugars of mucin-type acceptors. This Mus musculus (Mouse) protein is Carbohydrate sulfotransferase 5 (Chst5).